A 78-amino-acid chain; its full sequence is Acyl carrier protein (78 aa).

The region spanning 2 to 77 (SDTAERIKKI…DAVSYIDEHK (76 aa)) is the Carrier domain. Serine 37 bears the O-(pantetheine 4'-phosphoryl)serine mark.

It belongs to the acyl carrier protein (ACP) family. In terms of processing, 4'-phosphopantetheine is transferred from CoA to a specific serine of apo-ACP by AcpS. This modification is essential for activity because fatty acids are bound in thioester linkage to the sulfhydryl of the prosthetic group.

It localises to the cytoplasm. Its pathway is lipid metabolism; fatty acid biosynthesis. Functionally, carrier of the growing fatty acid chain in fatty acid biosynthesis. This chain is Acyl carrier protein, found in Zymomonas mobilis subsp. mobilis (strain ATCC 31821 / ZM4 / CP4).